A 220-amino-acid chain; its full sequence is WAP four-disulfide core domain protein 1 (220 aa).

Positions 1 to 31 (MPLTGVGPGSCRRQIIRALCLLLLLLHAGSA) are cleaved as a signal peptide. A disordered region spans residues 46–70 (KSRAEEAGAPGGPRQPRADRCPPPP). The WAP domain maps to 59 to 108 (RQPRADRCPPPPRTLPPGACQAARCQADSECPRHRRCCYNGCAYACLEAV). 4 cysteine pairs are disulfide-bonded: C66–C96, C78–C100, C83–C95, and C89–C104. The tract at residues 199–220 (EYPEGDSKNVAEPGRGQQKHFQ) is disordered.

The protein localises to the secreted. Its function is as follows. Has growth inhibitory activity. The protein is WAP four-disulfide core domain protein 1 (WFDC1) of Homo sapiens (Human).